The primary structure comprises 199 residues: N-(5'-phosphoribosyl)anthranilate isomerase (199 aa).

The protein belongs to the TrpF family.

The enzyme catalyses N-(5-phospho-beta-D-ribosyl)anthranilate = 1-(2-carboxyphenylamino)-1-deoxy-D-ribulose 5-phosphate. Its pathway is amino-acid biosynthesis; L-tryptophan biosynthesis; L-tryptophan from chorismate: step 3/5. This Streptococcus pneumoniae (strain ATCC BAA-255 / R6) protein is N-(5'-phosphoribosyl)anthranilate isomerase.